The following is a 127-amino-acid chain: Sulfiredoxin (127 aa).

The protein belongs to the sulfiredoxin family. Mg(2+) serves as cofactor. In terms of processing, forms a transient disulfide bond with TSA1 during the reduction of cysteine sulfinic acid (-SO2H).

The protein resides in the cytoplasm. It is found in the nucleus. The enzyme catalyses S-hydroxy-S-oxy-L-cysteinyl-[peroxiredoxin] + [protein]-dithiol + ATP = S-hydroxy-L-cysteinyl-[peroxiredoxin] + [protein]-disulfide + ADP + phosphate. Contributes to oxidative stress resistance by reducing cysteine-sulfinic acid formed under exposure to oxidants in the peroxiredoxin TSA1. May catalyze the reduction in a multi-step process by acting both as a specific phosphotransferase and as thioltransferase. This Saccharomyces cerevisiae (strain ATCC 204508 / S288c) (Baker's yeast) protein is Sulfiredoxin.